A 141-amino-acid polypeptide reads, in one-letter code: Holin (141 aa).

2 helical membrane-spanning segments follow: residues 9–29 (LYYV…WGGI) and 37–57 (IGDI…ATAA). The stretch at 74–108 (VDQVTRGVEQVLAAKQNAEAEVERVKQALESAVNG) forms a coiled coil.

Belongs to the Mycobacterium phage D29 holin family. As to quaternary structure, homomultimer. Self-associates to form a pore.

The protein resides in the host cell inner membrane. In terms of biological role, accumulates harmlessly in the cytoplasmic membrane until it reaches a critical concentration that triggers the formation of micron-scale pores (holes) causing host cell membrane disruption and endolysin escape into the periplasmic space. Determines the precise timing of host cell lysis. Participates with the endolysin protein in the sequential events which lead to the programmed host cell lysis releasing the mature viral particles from the host cell. This chain is Holin (11), found in Mycobacterium (Mycobacteriophage D29).